Reading from the N-terminus, the 453-residue chain is F-box/FBD/LRR-repeat protein At4g00160 (453 aa).

Positions 15–68 constitute an F-box domain; it reads KDRISELPDALLIKILSFLPTKIVVATSVFSKQWRPLWKLVPNLEFDSEDYDDK. LRR repeat units lie at residues 89–111, 165–190, 215–239, 247–270, 282–307, and 331–358; these read LESF…LWVG, MKSL…LLSG, VPSL…VINA, IEDL…IFDG, LTSV…IFYQ, and SPKL…KWNE. The FBD domain occupies 355-406; the sequence is KWNEPKYVPECLLSHLETFVWRRFDWGREEEKEIATYILKNARRLNKATFST.

This is F-box/FBD/LRR-repeat protein At4g00160 from Arabidopsis thaliana (Mouse-ear cress).